Consider the following 123-residue polypeptide: Alpha-ketoglutarate dehydrogenase subunit 4, mitochondrial (123 aa).

The N-terminal 8 residues, 1–8 (MIATPIRL), are a transit peptide targeting the mitochondrion.

Belongs to the alpha-ketoglutarate dehydrogenase component 4 family. As to quaternary structure, component of the 2-oxoglutarate dehydrogenase complex (OGDC), also called alpha-ketoglutarate dehydrogenase (KGDH) complex. The copmplex is composed of the catalytic subunits OGDH (2-oxoglutarate dehydrogenase KGD1; also called E1 subunit), DLST (dihydrolipoamide succinyltransferase KGD2; also called E2 subunit) and DLD (dihydrolipoamide dehydrogenase LPD1; also called E3 subunit), and the assembly factor KGD4. Within OGDC, interacts (via N-terminus) with E3 subunit and (via C-terminus) with the complex core formed by E1 and E2 subunits.

The protein resides in the mitochondrion. In terms of biological role, molecular adapter that is necessary to a form a stable 2-oxoglutarate dehydrogenase enzyme complex (OGDC). Required for incorporation of the E3 subunit (LPD1) into the E1-E2 core (KGD1-KGD2) of mitochondrial OGDC, and acting as a stability factor for the fully assembled complex. The protein is Alpha-ketoglutarate dehydrogenase subunit 4, mitochondrial of Saccharomyces cerevisiae (strain ATCC 204508 / S288c) (Baker's yeast).